Consider the following 65-residue polypeptide: Large ribosomal subunit protein bL35 (65 aa).

The protein belongs to the bacterial ribosomal protein bL35 family.

This chain is Large ribosomal subunit protein bL35, found in Photorhabdus laumondii subsp. laumondii (strain DSM 15139 / CIP 105565 / TT01) (Photorhabdus luminescens subsp. laumondii).